The sequence spans 356 residues: Phosphoribosylformylglycinamidine cyclo-ligase (356 aa).

The protein belongs to the AIR synthase family.

Its subcellular location is the cytoplasm. It carries out the reaction 2-formamido-N(1)-(5-O-phospho-beta-D-ribosyl)acetamidine + ATP = 5-amino-1-(5-phospho-beta-D-ribosyl)imidazole + ADP + phosphate + H(+). It functions in the pathway purine metabolism; IMP biosynthesis via de novo pathway; 5-amino-1-(5-phospho-D-ribosyl)imidazole from N(2)-formyl-N(1)-(5-phospho-D-ribosyl)glycinamide: step 2/2. This Rhizobium meliloti (strain 1021) (Ensifer meliloti) protein is Phosphoribosylformylglycinamidine cyclo-ligase.